Here is a 524-residue protein sequence, read N- to C-terminus: Inosine-5'-monophosphate dehydrogenase (524 aa).

CBS domains lie at 121–180 (FILD…NTPV) and 184–242 (MTPR…PLAS). Residues 280–282 (DSS) and 330–332 (GMG) contribute to the NAD(+) site. Residues Gly-332 and Gly-334 each coordinate K(+). An IMP-binding site is contributed by Ser-335. Cys-337 contributes to the K(+) binding site. Cys-337 acts as the Thioimidate intermediate in catalysis. Residues 370–372 (DGG), 393–394 (GG), and 417–421 (YRGMG) contribute to the IMP site. Arg-439 (proton acceptor) is an active-site residue. Gln-451 is a binding site for IMP. K(+)-binding residues include Glu-510 and Gly-511.

Belongs to the IMPDH/GMPR family. Homotetramer. The cofactor is K(+).

Its subcellular location is the cytoplasm. The enzyme catalyses IMP + NAD(+) + H2O = XMP + NADH + H(+). It functions in the pathway purine metabolism; XMP biosynthesis via de novo pathway; XMP from IMP: step 1/1. Its activity is regulated as follows. Mycophenolic acid (MPA) is a non-competitive inhibitor that prevents formation of the closed enzyme conformation by binding to the same site as the amobile flap. In contrast, mizoribine monophosphate (MZP) is a competitive inhibitor that induces the closed conformation. MPA is a potent inhibitor of mammalian IMPDHs but a poor inhibitor of the bacterial enzymes. MZP is a more potent inhibitor of bacterial IMPDH. Catalyzes the conversion of inosine 5'-phosphate (IMP) to xanthosine 5'-phosphate (XMP), the first committed and rate-limiting step in the de novo synthesis of guanine nucleotides, and therefore plays an important role in the regulation of cell growth. The sequence is that of Inosine-5'-monophosphate dehydrogenase (gua1) from Schizosaccharomyces pombe (strain 972 / ATCC 24843) (Fission yeast).